The following is a 118-amino-acid chain: Large ribosomal subunit protein bL20 (118 aa).

Belongs to the bacterial ribosomal protein bL20 family.

Binds directly to 23S ribosomal RNA and is necessary for the in vitro assembly process of the 50S ribosomal subunit. It is not involved in the protein synthesizing functions of that subunit. This is Large ribosomal subunit protein bL20 from Hydrogenovibrio crunogenus (strain DSM 25203 / XCL-2) (Thiomicrospira crunogena).